The primary structure comprises 354 residues: Membrane progestin receptor alpha-B (354 aa).

The Cytoplasmic segment spans residues 1 to 76 (MATVVMEQIG…LTLFQRHNES (76 aa)). Residues 77-97 (VNVWTHLLASLIILVKFQELS) form a helical membrane-spanning segment. Over 98-110 (ETVDFLRDPHAQP) the chain is Extracellular. A helical transmembrane segment spans residues 111–131 (MFILLLAAFTYLGCSALAHLL). The Cytoplasmic segment spans residues 132–141 (SAKSEISHYT). The chain crosses the membrane as a helical span at residues 142–162 (FYFLDYVGVAVYQYGSALAHF). At 163–175 (YYVVEEEWHAQVR) the chain is on the extracellular side. A helical membrane pass occupies residues 176–196 (TFFLPASAFLAWLSCTGCCYG). The Cytoplasmic segment spans residues 197-244 (KYASPKLPKFVHKLFQVVPSGLAYCLDISPVLHRIYRCYSSEHWCADQ). A helical transmembrane segment spans residues 245 to 265 (AVVYHCYQVLFFLISAYFFSY). Residues 266–277 (PHPERWFPGRCD) are Extracellular-facing. The helical transmembrane segment at 278–298 (FIGQGHQIFHVFLVLCTLVQI) threads the bilayer. The Cytoplasmic portion of the chain corresponds to 299–318 (EAVRLDYTERRRLYEHLHGD). A helical transmembrane segment spans residues 319 to 339 (LAHDAVALFIFTACCSALTAF). At 340-354 (YVRKRVKTYLEEKQE) the chain is on the extracellular side.

The protein belongs to the ADIPOR family.

The protein localises to the cell membrane. Its function is as follows. Steroid membrane receptor. Signals upon progestin binding, resulting in rapid activation of MAPK and down-regulation of adenylyl cyclase activity. Interacts with steroids with varying degrees of affinity, showing specificity for activation by the maturation-inducing steroid (MIS) 4-pregnen-17,20beta-diol-3-one (17,20beta-DHP). Capable of mediating progestin-induced oocyte maturation. This chain is Membrane progestin receptor alpha-B (paqr7b), found in Danio rerio (Zebrafish).